A 375-amino-acid polypeptide reads, in one-letter code: Fasciculation and elongation protein zeta-2 (375 aa).

Residues 1 to 42 form a disordered region; it reads MAADGDWQDFYEFQEPAGSVRDQENCNASPEAGAGAHAGGDS. Phosphoserine occurs at positions 130, 171, and 190. A coiled-coil region spans residues 156-177; that stretch reads TADQVIEEIEEMMQESPDLEDD. Residues 206-281 are a coiled coil; that stretch reads ERVKRLSVSE…AKKKKKLKNG (76 aa). Residues 265–297 form a disordered region; that stretch reads QKEHKETAKKKKKLKNGSSQNGRNERSHMPGTR.

It belongs to the zygin family. Homodimer; disulfide-linked. May form heterodimers with FEZ1. Interacts with synaptotagmin.

In terms of biological role, involved in axonal outgrowth and fasciculation. This Rattus norvegicus (Rat) protein is Fasciculation and elongation protein zeta-2 (Fez2).